The following is a 652-amino-acid chain: Maternal embryonic leucine zipper kinase (652 aa).

The Protein kinase domain maps to 13–265; that stretch reads YELHETIGTG…VKHLLSHPWL (253 aa). Residues 19-27 and lysine 42 contribute to the ATP site; that span reads IGTGGFAKV. Aspartate 134 functions as the Proton acceptor in the catalytic mechanism. Residue threonine 169 is modified to Phosphothreonine; by autocatalysis. Serine 173 carries the phosphoserine; by autocatalysis modification. The UBA-like stretch occupies residues 284 to 323; it reads VDEDCVTELSVFYKCSRTSTSRLISEWNYDHITASYLLLH. The autoinhibitory region stretch occupies residues 328–652; that stretch reads HGKPVRLKRP…VEDILSSCKV (325 aa). A phosphothreonine mark is found at threonine 415, threonine 450, threonine 452, threonine 482, and threonine 484. A disordered region spans residues 443–492; that stretch reads FLHPAPWTPTPRRKQNEKKGILTTPNKNSHTKEKNQSKETPTKKPITTGE. The span at 472–484 shows a compositional bias: basic and acidic residues; that stretch reads HTKEKNQSKETPT. Phosphoserine occurs at positions 499, 506, and 518. The 50-residue stretch at 603–652 folds into the KA1 domain; that stretch reads SDFGKVTMQFELEVCQLSKSEMVGIRRQRLKGDAWVYKRLVEDILSSCKV.

This sequence belongs to the protein kinase superfamily. CAMK Ser/Thr protein kinase family. SNF1 subfamily. Autophosphorylated: autophosphorylation of the T-loop at Thr-169 and Ser-173 is required for activation. Phosphorylated by the maturation promoting factor (MPF), composed of cdk1 and a cyclin-B. Also phosphorylated by some MAPK. Phosphorylated during oocyte maturation. Dephosphorylation destabilizes the protein. Post-translationally, degraded when cells exit mitosis.

The protein localises to the cell membrane. It carries out the reaction L-seryl-[protein] + ATP = O-phospho-L-seryl-[protein] + ADP + H(+). It catalyses the reaction L-threonyl-[protein] + ATP = O-phospho-L-threonyl-[protein] + ADP + H(+). With respect to regulation, activated by autophosphorylation of the T-loop at Thr-169 and Ser-173: in contrast to other members of the SNF1 subfamily, phosphorylation at Thr-169 is not mediated by STK11/LKB1 but via autophosphorylation instead. Functionally, serine/threonine-protein kinase involved in various processes such as cell cycle regulation, self-renewal of stem cells, apoptosis and splicing regulation. Also plays a role in primitive hematopoiesis, possibly by affecting the expression of genes critical for hematopoiesis. Plays a role in cytokinesis during early development. This is Maternal embryonic leucine zipper kinase (melk) from Xenopus tropicalis (Western clawed frog).